Consider the following 227-residue polypeptide: UPF0173 metal-dependent hydrolase Cmaq_1073 (227 aa).

The protein belongs to the UPF0173 family.

This is UPF0173 metal-dependent hydrolase Cmaq_1073 from Caldivirga maquilingensis (strain ATCC 700844 / DSM 13496 / JCM 10307 / IC-167).